The following is a 138-amino-acid chain: Acidic phospholipase A2 BITP01A (138 aa).

A signal peptide spans 1–16 (MRTLWIMAVLLVGVEG). Intrachain disulfides connect cysteine 42–cysteine 131, cysteine 44–cysteine 60, cysteine 59–cysteine 111, cysteine 65–cysteine 138, cysteine 66–cysteine 104, cysteine 73–cysteine 97, and cysteine 91–cysteine 102. Ca(2+) contacts are provided by tyrosine 43, glycine 45, and glycine 47. Histidine 63 is a catalytic residue. Aspartate 64 contacts Ca(2+). The active site involves aspartate 105.

Ca(2+) is required as a cofactor. Expressed by the venom gland.

The protein resides in the secreted. It catalyses the reaction a 1,2-diacyl-sn-glycero-3-phosphocholine + H2O = a 1-acyl-sn-glycero-3-phosphocholine + a fatty acid + H(+). Its function is as follows. Snake venom phospholipase A2 (PLA2) that induces edema in mice, produces neuromuscular blockade in chick biventer cervicis, increases CK release and produces myonecrosis. PLA2 catalyzes the calcium-dependent hydrolysis of the 2-acyl groups in 3-sn-phosphoglycerides. The polypeptide is Acidic phospholipase A2 BITP01A (Bothrops insularis (Golden lancehead)).